Reading from the N-terminus, the 238-residue chain is Protein shisa-3 homolog (238 aa).

The N-terminal stretch at 1–21 (MGALLAFCLLVGLLRWGPAGA) is a signal peptide. Topologically, residues 22-98 (QQPGEYCHGW…GITAQPVYVP (77 aa)) are lumenal. The helical transmembrane segment at 99-119 (FLIVGSIFIAFIILGSLVAIY) threads the bilayer. Over 120-238 (CCTCLRPKEP…GKSCPDFSSS (119 aa)) the chain is Cytoplasmic.

Belongs to the shisa family.

It localises to the endoplasmic reticulum membrane. In terms of biological role, plays an essential role in the maturation of presomitic mesoderm cells by individual attenuation of both FGF and WNT signaling. This chain is Protein shisa-3 homolog (Shisa3), found in Mus musculus (Mouse).